The chain runs to 2092 residues: RNA-directed RNA polymerase L (2092 aa).

Positions Val-18–Gly-215 are endonuclease. Mn(2+) is bound by residues His-79, Asp-111, and Glu-125. Lys-143 (for endonuclease activity) is an active-site residue. The RdRp catalytic domain occupies Ala-975–Leu-1166. Asp-1134 lines the Mg(2+) pocket. Positions Gly-1706–Lys-1822 are cap-binding.

This sequence belongs to the Bunyavirales RNA polymerase family. Homomultimer. Interacts with glycoprotein N; this interaction allows efficient polymerase packaging into virus particles. Interacts with nucleoprotein N. It depends on Mn(2+) as a cofactor. Requires Mg(2+) as cofactor.

Its subcellular location is the host Golgi apparatus. The protein localises to the host endoplasmic reticulum. The protein resides in the host endoplasmic reticulum-Golgi intermediate compartment. It localises to the virion. The catalysed reaction is RNA(n) + a ribonucleoside 5'-triphosphate = RNA(n+1) + diphosphate. RNA-dependent RNA polymerase, which is responsible for the replication and transcription of the viral RNA genome using antigenomic RNA as an intermediate. During transcription, synthesizes subgenomic RNAs and assures their capping by a cap-snatching mechanism, which involves the endonuclease activity cleaving the host capped pre-mRNAs. These short capped RNAs are then used as primers for viral transcription. The 3'-end of subgenomic mRNAs molecules are not polyadenylated. During replication, the polymerase binds the 5' and 3' vRNA extremities at distinct sites. In turn, significant conformational changes occur in the polymerase and in vRNA to initiate active RNA synthesis. As a consequence of the use of the same enzyme for both transcription and replication, these mechanisms need to be well coordinated. In Aedes (Bovine), this protein is RNA-directed RNA polymerase L.